The following is a 529-amino-acid chain: Arginine--tRNA ligase (529 aa).

A 'HIGH' region motif is present at residues 113-123; the sequence is ANPTGPLHIGH.

This sequence belongs to the class-I aminoacyl-tRNA synthetase family. Monomer.

Its subcellular location is the cytoplasm. It carries out the reaction tRNA(Arg) + L-arginine + ATP = L-arginyl-tRNA(Arg) + AMP + diphosphate. In Campylobacter curvus (strain 525.92), this protein is Arginine--tRNA ligase.